The primary structure comprises 215 residues: Sodium channel regulatory subunit beta-2 (215 aa).

Positions 1–29 (MHRDAWLPRPAFSLTGLSLFFSLVPSGRS) are cleaved as a signal peptide. Residues 30-157 (MEVTVPTTLS…LEVPPERDST (128 aa)) are Extracellular-facing. An Ig-like C2-type domain is found at 32 to 154 (VTVPTTLSVL…QVLLEVPPER (123 aa)). Residues Asn-42, Asn-66, and Asn-74 are each glycosylated (N-linked (GlcNAc...) asparagine). Cystine bridges form between Cys-50–Cys-127 and Cys-72–Cys-75. Residues 158–179 (VAVIVGASVGGFLAVVILVLMV) traverse the membrane as a helical segment. The Cytoplasmic segment spans residues 180–215 (VKCVRRKKEQKLSTDDLKTEEEGKTDGEGNAEDGAK). Residues 187 to 215 (KEQKLSTDDLKTEEEGKTDGEGNAEDGAK) are disordered. A compositionally biased stretch (basic and acidic residues) spans 189–215 (QKLSTDDLKTEEEGKTDGEGNAEDGAK). Position 192 is a phosphoserine (Ser-192). The residue at position 204 (Thr-204) is a Phosphothreonine.

Belongs to the sodium channel auxiliary subunit SCN2B (TC 8.A.17) family. In terms of assembly, a voltage-gated sodium (Nav) channel consists of an ion-conducting pore-forming alpha subunit functional on its own that is regulated by one or more beta subunits. The beta subunit SCN2B is disulfide-linked to the pore-forming alpha subunit. Interacts with SCN1A; regulatory subunit of SCN1A/Nav1.1. Interacts with SCN2A; regulatory subunit of SCN2A/Nav1.2. Interacts with SCN3A; regulatory subunit of SCN3A/Nav1.3. Interacts with SCN5A; regulatory subunit of SCN5A/Nav1.5. Interacts with SCN8A; regulatory subunit of SCN8A/Nav1.6. Interacts with SCN9A; regulatory subunit of SCN9A/Nav1.7. Interacts with SCN10A; regulatory subunit of SCN10A/Nav1.8. Interacts with TNR; may play a crucial role in clustering and regulation of activity of SCN2B-containing Nav channels at nodes of Ranvier.

It localises to the cell membrane. Its subcellular location is the cell projection. The protein localises to the axon. Functionally, regulatory subunit of multiple voltage-gated sodium (Nav) channels directly mediating the depolarization of excitable membranes. Navs, also called VGSCs (voltage-gated sodium channels) or VDSCs (voltage-dependent sodium channels), operate by switching between closed and open conformations depending on the voltage difference across the membrane. In the open conformation they allow Na(+) ions to selectively pass through the pore, along their electrochemical gradient. The influx of Na+ ions provokes membrane depolarization, initiating the propagation of electrical signals throughout cells and tissues. The accessory beta subunits participate in localization and functional modulation of the Nav channels. Modulates the activity of SCN1A/Nav1.1, SCN2A/Nav1.2, SCN2A/Nav1.3, SCN5A/Nav1.5, SCN8A/Nav1.6, SCN9A/Nav1.7 and SCN10A/Nav1.8. The protein is Sodium channel regulatory subunit beta-2 of Rattus norvegicus (Rat).